The primary structure comprises 129 residues: Small ribosomal subunit protein uS11 (129 aa).

This sequence belongs to the universal ribosomal protein uS11 family. In terms of assembly, part of the 30S ribosomal subunit. Interacts with proteins S7 and S18. Binds to IF-3.

Functionally, located on the platform of the 30S subunit, it bridges several disparate RNA helices of the 16S rRNA. Forms part of the Shine-Dalgarno cleft in the 70S ribosome. The protein is Small ribosomal subunit protein uS11 of Synechococcus sp. (strain RCC307).